Reading from the N-terminus, the 749-residue chain is Myosin-binding protein 2 (749 aa).

Residues 17–37 (ITLILVYAFLEWSLIFFILLN) form a helical membrane-spanning segment. A disordered region spans residues 164–184 (NLNDSQEETEEKKVPQSHEKL). Residues 173-184 (EEKKVPQSHEKL) are compositionally biased toward basic and acidic residues. Positions 411–509 (LTVDKLKFEL…ELEKELEVYR (99 aa)) constitute a GTD-binding domain. The stretch at 589–621 (ERLSILGRLKFLEEKLTDLNNEEDDEEEAKTFE) forms a coiled coil. A disordered region spans residues 608–640 (NNEEDDEEEAKTFESNGSINGNEHIHGKETNGK). Residues 630-639 (EHIHGKETNG) are compositionally biased toward basic and acidic residues. Residues 676–710 (DSEKGENVTIEEEVDELYERLEALEADREFLRHCV) are a coiled coil.

Interacts with myosin XI-K and XI-1. Expressed in leaf epidermal cells, roots and root hairs.

Its subcellular location is the endomembrane system. Functionally, membrane-anchored myosin receptors that define a distinct, plant-specific transport vesicle compartment. This Arabidopsis thaliana (Mouse-ear cress) protein is Myosin-binding protein 2.